The following is a 435-amino-acid chain: Light-independent protochlorophyllide reductase subunit N (435 aa).

3 residues coordinate [4Fe-4S] cluster: C23, C48, and C108.

It belongs to the BchN/ChlN family. As to quaternary structure, protochlorophyllide reductase is composed of three subunits; ChlL, ChlN and ChlB. Forms a heterotetramer of two ChlB and two ChlN subunits. The cofactor is [4Fe-4S] cluster.

It localises to the plastid. The protein resides in the chloroplast. The catalysed reaction is chlorophyllide a + oxidized 2[4Fe-4S]-[ferredoxin] + 2 ADP + 2 phosphate = protochlorophyllide a + reduced 2[4Fe-4S]-[ferredoxin] + 2 ATP + 2 H2O. Its pathway is porphyrin-containing compound metabolism; chlorophyll biosynthesis (light-independent). Functionally, component of the dark-operative protochlorophyllide reductase (DPOR) that uses Mg-ATP and reduced ferredoxin to reduce ring D of protochlorophyllide (Pchlide) to form chlorophyllide a (Chlide). This reaction is light-independent. The NB-protein (ChlN-ChlB) is the catalytic component of the complex. This chain is Light-independent protochlorophyllide reductase subunit N, found in Auxenochlorella protothecoides (Green microalga).